Here is a 101-residue protein sequence, read N- to C-terminus: Small ribosomal subunit protein bS6 (101 aa).

Belongs to the bacterial ribosomal protein bS6 family.

Functionally, binds together with bS18 to 16S ribosomal RNA. The sequence is that of Small ribosomal subunit protein bS6 from Paenarthrobacter aurescens (strain TC1).